The following is a 242-amino-acid chain: Probable transcriptional regulatory protein XOO1543 (242 aa).

The protein belongs to the TACO1 family.

The protein resides in the cytoplasm. The polypeptide is Probable transcriptional regulatory protein XOO1543 (Xanthomonas oryzae pv. oryzae (strain MAFF 311018)).